A 417-amino-acid polypeptide reads, in one-letter code: Voltage-gated potassium channel Kch (417 aa).

At 1 to 21 the chain is on the cytoplasmic side; the sequence is MSHWATFKQTATNLWVTLRHD. The helical transmembrane segment at 22 to 41 threads the bilayer; sequence ILALAVFLNGLLIFKTIYGM. At 42–63 the chain is on the periplasmic side; sequence SVNLLDIFHIKAFSELDLSLLA. A helical membrane pass occupies residues 64 to 83; sequence NAPLFMLGVFLVLNSIGLLF. The Cytoplasmic segment spans residues 84–86; sequence RAK. Residues 87–104 form a helical membrane-spanning segment; sequence LAWAISIILLLIALIYTL. Residues 105–110 are Periplasmic-facing; sequence HFYPWL. The chain crosses the membrane as a helical span at residues 111 to 127; it reads KFSIGFCIFTLVFLLIL. At 128–140 the chain is on the cytoplasmic side; the sequence is RKDFSHSSAAAGT. Residues 141-160 form a helical membrane-spanning segment; that stretch reads IFAFISFTTLLFYSTYGALY. The Periplasmic portion of the chain corresponds to 161–199; it reads LSEGFNPRIESLMTAFYFSIETMSTVGYGDIVPVSESAR. The short motif at 185-190 is the Selectivity filter element; that stretch reads TVGYGD. A helical transmembrane segment spans residues 200–220; sequence LFTISVIISGITVFATSMTSI. The Cytoplasmic segment spans residues 221-417; sequence FGPLIRGGFN…KADSKESAQK (197 aa). The RCK N-terminal domain maps to 243–363; sequence KDHFIVCGHS…IKMVHPDIIL (121 aa).

This sequence belongs to the potassium channel family. In terms of assembly, dimer.

It localises to the cell inner membrane. Its function is as follows. K(+)-specific ion channel. May play a role in the defense against osmotic shock. This chain is Voltage-gated potassium channel Kch (kch), found in Escherichia coli (strain K12).